The following is an 89-amino-acid chain: MLKDTLKVKNLVMKYGKSYLNTGSSSVQIALLTRKINYLQKHFILHKEDHCGRKGLLNMVSRRRKLLDYLKSNQYENYLFLIKKLGLRH.

The protein belongs to the universal ribosomal protein uS15 family. In terms of assembly, part of the 30S ribosomal subunit. Forms a bridge to the 50S subunit in the 70S ribosome, contacting the 23S rRNA.

In terms of biological role, one of the primary rRNA binding proteins, it binds directly to 16S rRNA where it helps nucleate assembly of the platform of the 30S subunit by binding and bridging several RNA helices of the 16S rRNA. Forms an intersubunit bridge (bridge B4) with the 23S rRNA of the 50S subunit in the ribosome. This chain is Small ribosomal subunit protein uS15, found in Buchnera aphidicola subsp. Cinara cedri (strain Cc).